A 465-amino-acid chain; its full sequence is Mothers against decapentaplegic homolog 5 (465 aa).

Residues 13–137 form the MH1 domain; it reads PAVKRLLGWK…YKRVESPVLP (125 aa). 4 residues coordinate Zn(2+): C65, C110, C122, and H127. The tract at residues 163-242 is disordered; it reads NEPHMPHNAT…MGQDNSQSMD (80 aa). Positions 173 to 183 are enriched in polar residues; that stretch reads FPDSFQQPNST. The segment covering 198–214 has biased composition (low complexity); the sequence is ASSTYPSSPASSGPSSP. The MH2 domain maps to 271-465; that stretch reads WCSIVYYELN…SPLNPISSVS (195 aa).

The protein belongs to the dwarfin/SMAD family. In terms of assembly, may form trimers with the co-SMAD SMAD4.

It is found in the cytoplasm. The protein resides in the nucleus. Functionally, transcriptional modulator activated by BMP (bone morphogenetic proteins) type 1 receptor kinase. SMAD5 is a receptor-regulated SMAD (R-SMAD). The sequence is that of Mothers against decapentaplegic homolog 5 (SMAD5) from Gallus gallus (Chicken).